A 227-amino-acid polypeptide reads, in one-letter code: Cytochrome c oxidase subunit 2 (227 aa).

Topologically, residues 1–14 are mitochondrial intermembrane; sequence MPYPLQLGLQDATS. The chain crosses the membrane as a helical span at residues 15–45; the sequence is PIMEELTHFHDHTLMIVFLISSLVLYIISSM. Topologically, residues 46 to 59 are mitochondrial matrix; the sequence is LTTKLTHTSTMDAQ. A helical transmembrane segment spans residues 60 to 87; it reads EVETIWTILPAMILILIALPSLRILYMM. Over 88 to 227 the chain is Mitochondrial intermembrane; sequence DEINDPSLTV…YFEDWSASLL (140 aa). Cu cation is bound by residues H161, C196, E198, C200, H204, and M207. E198 is a binding site for Mg(2+).

This sequence belongs to the cytochrome c oxidase subunit 2 family. In terms of assembly, component of the cytochrome c oxidase (complex IV, CIV), a multisubunit enzyme composed of 14 subunits. The complex is composed of a catalytic core of 3 subunits MT-CO1, MT-CO2 and MT-CO3, encoded in the mitochondrial DNA, and 11 supernumerary subunits COX4I, COX5A, COX5B, COX6A, COX6B, COX6C, COX7A, COX7B, COX7C, COX8 and NDUFA4, which are encoded in the nuclear genome. The complex exists as a monomer or a dimer and forms supercomplexes (SCs) in the inner mitochondrial membrane with NADH-ubiquinone oxidoreductase (complex I, CI) and ubiquinol-cytochrome c oxidoreductase (cytochrome b-c1 complex, complex III, CIII), resulting in different assemblies (supercomplex SCI(1)III(2)IV(1) and megacomplex MCI(2)III(2)IV(2)). Found in a complex with TMEM177, COA6, COX18, COX20, SCO1 and SCO2. Interacts with TMEM177 in a COX20-dependent manner. Interacts with COX20. Interacts with COX16. Requires Cu cation as cofactor.

It localises to the mitochondrion inner membrane. It carries out the reaction 4 Fe(II)-[cytochrome c] + O2 + 8 H(+)(in) = 4 Fe(III)-[cytochrome c] + 2 H2O + 4 H(+)(out). In terms of biological role, component of the cytochrome c oxidase, the last enzyme in the mitochondrial electron transport chain which drives oxidative phosphorylation. The respiratory chain contains 3 multisubunit complexes succinate dehydrogenase (complex II, CII), ubiquinol-cytochrome c oxidoreductase (cytochrome b-c1 complex, complex III, CIII) and cytochrome c oxidase (complex IV, CIV), that cooperate to transfer electrons derived from NADH and succinate to molecular oxygen, creating an electrochemical gradient over the inner membrane that drives transmembrane transport and the ATP synthase. Cytochrome c oxidase is the component of the respiratory chain that catalyzes the reduction of oxygen to water. Electrons originating from reduced cytochrome c in the intermembrane space (IMS) are transferred via the dinuclear copper A center (CU(A)) of subunit 2 and heme A of subunit 1 to the active site in subunit 1, a binuclear center (BNC) formed by heme A3 and copper B (CU(B)). The BNC reduces molecular oxygen to 2 water molecules using 4 electrons from cytochrome c in the IMS and 4 protons from the mitochondrial matrix. This chain is Cytochrome c oxidase subunit 2 (MT-CO2), found in Dugong dugon (Dugong).